Consider the following 332-residue polypeptide: L-lactate dehydrogenase A chain (332 aa).

Residues 29–57 (GMVGMASAVSILLKDLCDELALVDVMEDK) and arginine 99 each bind NAD(+). 3 residues coordinate substrate: arginine 106, asparagine 138, and arginine 169. Asparagine 138 is an NAD(+) binding site. Histidine 193 acts as the Proton acceptor in catalysis. Residue threonine 248 participates in substrate binding.

Belongs to the LDH/MDH superfamily. LDH family. In terms of assembly, homotetramer.

The protein resides in the cytoplasm. It catalyses the reaction (S)-lactate + NAD(+) = pyruvate + NADH + H(+). Its pathway is fermentation; pyruvate fermentation to lactate; (S)-lactate from pyruvate: step 1/1. In terms of biological role, interconverts simultaneously and stereospecifically pyruvate and lactate with concomitant interconversion of NADH and NAD(+). In Sphyraena lucasana (Lucas barracuda), this protein is L-lactate dehydrogenase A chain (ldha).